Reading from the N-terminus, the 310-residue chain is ADP-L-glycero-D-manno-heptose-6-epimerase (310 aa).

Residues phenylalanine 10–isoleucine 11, aspartate 31–asparagine 32, lysine 38, lysine 53, glutamate 75–serine 79, and asparagine 92 each bind NADP(+). The Proton acceptor role is filled by tyrosine 140. Lysine 144 lines the NADP(+) pocket. Asparagine 169 contacts substrate. Valine 170 and lysine 178 together coordinate NADP(+). Residue lysine 178 is the Proton acceptor of the active site. Substrate-binding positions include serine 180, histidine 187, phenylalanine 201–serine 204, arginine 209, and tyrosine 272.

It belongs to the NAD(P)-dependent epimerase/dehydratase family. HldD subfamily. In terms of assembly, homopentamer. It depends on NADP(+) as a cofactor.

It carries out the reaction ADP-D-glycero-beta-D-manno-heptose = ADP-L-glycero-beta-D-manno-heptose. It functions in the pathway nucleotide-sugar biosynthesis; ADP-L-glycero-beta-D-manno-heptose biosynthesis; ADP-L-glycero-beta-D-manno-heptose from D-glycero-beta-D-manno-heptose 7-phosphate: step 4/4. Catalyzes the interconversion between ADP-D-glycero-beta-D-manno-heptose and ADP-L-glycero-beta-D-manno-heptose via an epimerization at carbon 6 of the heptose. This Salmonella paratyphi C (strain RKS4594) protein is ADP-L-glycero-D-manno-heptose-6-epimerase.